A 504-amino-acid chain; its full sequence is TGF-beta-activated kinase 1 and MAP3K7-binding protein 1 (504 aa).

Residues 1-22 (MAAQRRSLLQSEQQPSWTDDLP) are disordered. Phosphoserine is present on Ser7. The span at 7-17 (SLLQSEQQPSW) shows a compositional bias: polar residues. Residues 28-365 (GVGSASNRSY…EDMTLLVRNF (338 aa)) form the PPM-type phosphatase domain. At Ser378 the chain carries Phosphoserine. Ser395 is a glycosylation site (O-linked (GlcNAc) serine). Ser423 is subject to Phosphoserine; by MAPK14. Residues 430–439 (ATPTLTNQSP) show a composition bias toward polar residues. The segment at 430–478 (ATPTLTNQSPTLTLQSTNTHTQSSSSSSDGGLFRSRPAHSLPPGEDGRV) is disordered. Thr431 bears the Phosphothreonine; by MAPK14 mark. Position 438 is a phosphoserine; by MAPK14 (Ser438). Low complexity predominate over residues 440–457 (TLTLQSTNTHTQSSSSSS). The residue at position 442 (Thr442) is a Phosphothreonine.

In terms of assembly, interacts with XIAP and BIRC7. Interacts with TRAF6 and MAP3K7; during IL-1 signaling. Identified in the TRIKA2 complex composed of MAP3K7, TAB1 and TAB2. Interacts with TRAF6 and MAPK14; these interactions allow MAPK14 autophosphorylation. Interacts with STING1; interaction takes place following cGAMP activation and promotes TAB1 recruitment to the endoplasmic reticulum, triggering MAP3K7/TAK1 activation and STING1 phosphorylation. Phosphorylated at all three sites Ser-423, Thr-431 and Ser-438 by MAPK14 when cells were exposed to cellular stresses, or stimulated with TNF-alpha, IL1 or LPS. These phosphorylations inhibit TAK1 activation by a feedback control mechanism. Dephosphorylated by DUSP14 at Ser-438, leading to TAB1-MAP3K7/TAK1 complex inactivation in T-cells. Post-translationally, ubiquitinated by MAP3K1 with 'Lys-63'-linked polyubiquitin; leading to activation of TAK1 and of JNK and p38 MAP kinases following EGF and TGF-beta stimulation. Ubiquitinated by ITCH with 'Lys-48'-linked polyubiquitin; leading to proteasomal degradation. Ubiquitinated by RNF114 during maternal-to-zygotic transition; leading to degradation. In terms of processing, (Microbial infection) Deubiquitinated by Y.enterocolitica YopP. O-GlcNAcylated at Ser-395 by OGT is required for full MAP3K7/TAK1 activation upon stimulation with IL-1 or osmotic stress. Deglycosylated at Ser-395 by OGA. As to expression, ubiquitous.

The protein resides in the cytoplasm. Its subcellular location is the cytosol. The protein localises to the endoplasmic reticulum membrane. Key adapter protein that plays an essential role in JNK and NF-kappa-B activation and proinflammatory cytokines production in response to stimulation with TLRs and cytokines. Mechanistically, associates with the catalytic domain of MAP3K7/TAK1 to trigger MAP3K7/TAK1 autophosphorylation leading to its full activation. Similarly, associates with MAPK14 and triggers its autophosphorylation and subsequent activation. In turn, MAPK14 phosphorylates TAB1 and inhibits MAP3K7/TAK1 activation in a feedback control mechanism. Also plays a role in recruiting MAPK14 to the TAK1 complex for the phosphorylation of the TAB2 and TAB3 regulatory subunits. This Homo sapiens (Human) protein is TGF-beta-activated kinase 1 and MAP3K7-binding protein 1 (TAB1).